We begin with the raw amino-acid sequence, 51 residues long: Toxin CSTX-18 (51 aa).

4 cysteine pairs are disulfide-bonded: Cys-9-Cys-22, Cys-14-Cys-27, Cys-21-Cys-36, and Cys-29-Cys-34.

In terms of processing, contains 4 disulfide bonds. Expressed by the venom gland.

The protein resides in the secreted. This chain is Toxin CSTX-18, found in Cupiennius salei (American wandering spider).